Here is a 291-residue protein sequence, read N- to C-terminus: Pituitary-specific positive transcription factor 1 (291 aa).

The short motif at proline 5–isoleucine 13 is the 9aaTAD element. Positions methionine 124–glutamate 198 constitute a POU-specific domain. Positions lysine 214–lysine 273 form a DNA-binding region, homeobox.

This sequence belongs to the POU transcription factor family. Class-1 subfamily. Interacts with PITX1. Interacts with LHX3. Interacts with ELK1.

Its subcellular location is the nucleus. Transcription factor involved in the specification of the lactotrope, somatotrope, and thyrotrope phenotypes in the developing anterior pituitary. Activates growth hormone and prolactin genes. Specifically binds to the consensus sequence 5'-TAAAT-3'. This is Pituitary-specific positive transcription factor 1 (POU1F1) from Sus scrofa (Pig).